The primary structure comprises 779 residues: LPS-assembly protein LptD (779 aa).

An N-terminal signal peptide occupies residues 1–23; that stretch reads MKIRYSVLSTFIISALYSQDTQA.

The protein belongs to the LptD family. In terms of assembly, component of the lipopolysaccharide transport and assembly complex. Interacts with LptE and LptA.

Its subcellular location is the cell outer membrane. In terms of biological role, together with LptE, is involved in the assembly of lipopolysaccharide (LPS) at the surface of the outer membrane. The sequence is that of LPS-assembly protein LptD from Haemophilus ducreyi (strain 35000HP / ATCC 700724).